The following is a 167-amino-acid chain: SsrA-binding protein (167 aa).

Positions glutamine 139 to arginine 158 are enriched in basic and acidic residues. Residues glutamine 139–alanine 167 are disordered.

This sequence belongs to the SmpB family.

The protein localises to the cytoplasm. In terms of biological role, required for rescue of stalled ribosomes mediated by trans-translation. Binds to transfer-messenger RNA (tmRNA), required for stable association of tmRNA with ribosomes. tmRNA and SmpB together mimic tRNA shape, replacing the anticodon stem-loop with SmpB. tmRNA is encoded by the ssrA gene; the 2 termini fold to resemble tRNA(Ala) and it encodes a 'tag peptide', a short internal open reading frame. During trans-translation Ala-aminoacylated tmRNA acts like a tRNA, entering the A-site of stalled ribosomes, displacing the stalled mRNA. The ribosome then switches to translate the ORF on the tmRNA; the nascent peptide is terminated with the 'tag peptide' encoded by the tmRNA and targeted for degradation. The ribosome is freed to recommence translation, which seems to be the essential function of trans-translation. This chain is SsrA-binding protein, found in Xanthomonas oryzae pv. oryzae (strain MAFF 311018).